The primary structure comprises 187 residues: Elongation factor P (187 aa).

This sequence belongs to the elongation factor P family.

Its subcellular location is the cytoplasm. The protein operates within protein biosynthesis; polypeptide chain elongation. In terms of biological role, involved in peptide bond synthesis. Stimulates efficient translation and peptide-bond synthesis on native or reconstituted 70S ribosomes in vitro. Probably functions indirectly by altering the affinity of the ribosome for aminoacyl-tRNA, thus increasing their reactivity as acceptors for peptidyl transferase. The protein is Elongation factor P of Mycolicibacterium gilvum (strain PYR-GCK) (Mycobacterium gilvum (strain PYR-GCK)).